Reading from the N-terminus, the 131-residue chain is MAGTKPSDLGSLKVGQYVVIDGVACRVMDTTHSKPGKHGGAKVRLVAMGIFESVKKEHVGPASSRIDVPLIDKRKGQVLALMGENVQIMDMETYETLELPMPEDVEGIDSGVEVEYFEAMDRYKITRVISK.

Hypusine is present on Lys37.

This sequence belongs to the eIF-5A family.

It is found in the cytoplasm. Functionally, functions by promoting the formation of the first peptide bond. In Methanococcus maripaludis (strain C5 / ATCC BAA-1333), this protein is Translation initiation factor 5A (eIF5A).